Here is a 223-residue protein sequence, read N- to C-terminus: Ribose-5-phosphate isomerase A (223 aa).

Substrate is bound by residues 32–35, 85–88, and 98–101; these read TGST, DGAD, and KGGG. The active-site Proton acceptor is Glu107. Residue Lys125 participates in substrate binding.

Belongs to the ribose 5-phosphate isomerase family. As to quaternary structure, homodimer.

It carries out the reaction aldehydo-D-ribose 5-phosphate = D-ribulose 5-phosphate. It participates in carbohydrate degradation; pentose phosphate pathway; D-ribose 5-phosphate from D-ribulose 5-phosphate (non-oxidative stage): step 1/1. Its function is as follows. Catalyzes the reversible conversion of ribose-5-phosphate to ribulose 5-phosphate. The sequence is that of Ribose-5-phosphate isomerase A from Pseudomonas aeruginosa (strain LESB58).